Here is a 342-residue protein sequence, read N- to C-terminus: N-acetyl-gamma-glutamyl-phosphate reductase (342 aa).

The active site involves cysteine 149.

The protein belongs to the NAGSA dehydrogenase family. Type 1 subfamily.

It is found in the cytoplasm. It catalyses the reaction N-acetyl-L-glutamate 5-semialdehyde + phosphate + NADP(+) = N-acetyl-L-glutamyl 5-phosphate + NADPH + H(+). It participates in amino-acid biosynthesis; L-arginine biosynthesis; N(2)-acetyl-L-ornithine from L-glutamate: step 3/4. Its function is as follows. Catalyzes the NADPH-dependent reduction of N-acetyl-5-glutamyl phosphate to yield N-acetyl-L-glutamate 5-semialdehyde. This is N-acetyl-gamma-glutamyl-phosphate reductase from Cereibacter sphaeroides (strain ATCC 17029 / ATH 2.4.9) (Rhodobacter sphaeroides).